A 70-amino-acid polypeptide reads, in one-letter code: MKRQKRDMYARAFKRGYLAGVSGKSKDSCPIEQAEVRQEWLNGWREGRTDQWEGMTGVSGIHKLANVTTA.

Belongs to the ribosome modulation factor family.

It is found in the cytoplasm. In terms of biological role, during stationary phase, converts 70S ribosomes to an inactive dimeric form (100S ribosomes). The protein is Ribosome modulation factor of Marinobacter adhaerens (strain DSM 23420 / HP15).